A 299-amino-acid polypeptide reads, in one-letter code: 4-hydroxybenzoate octaprenyltransferase (299 aa).

The next 8 membrane-spanning stretches (helical) occupy residues 33 to 53 (VGFL…ADGV), 56 to 76 (WWTL…GCVI), 105 to 125 (NALL…LTMN), 151 to 171 (LPQV…FAAI), 180 to 200 (WLLY…YAMV), 214 to 234 (AILF…LMLL), 247 to 267 (HTYW…FIIA), and 278 to 298 (AFMH…LATT).

The protein belongs to the UbiA prenyltransferase family. Requires Mg(2+) as cofactor.

It is found in the cell inner membrane. It catalyses the reaction all-trans-octaprenyl diphosphate + 4-hydroxybenzoate = 4-hydroxy-3-(all-trans-octaprenyl)benzoate + diphosphate. The protein operates within cofactor biosynthesis; ubiquinone biosynthesis. In terms of biological role, catalyzes the prenylation of para-hydroxybenzoate (PHB) with an all-trans polyprenyl group. Mediates the second step in the final reaction sequence of ubiquinone-8 (UQ-8) biosynthesis, which is the condensation of the polyisoprenoid side chain with PHB, generating the first membrane-bound Q intermediate 3-octaprenyl-4-hydroxybenzoate. The chain is 4-hydroxybenzoate octaprenyltransferase from Xylella fastidiosa (strain M23).